The sequence spans 71 residues: Phenoloxidase 3 (71 aa).

Cu cation contacts are provided by His3 and His29.

The protein belongs to the tyrosinase family. Requires Cu(2+) as cofactor. Post-translationally, upon activation, a trypsin type protease cleaves prophenol oxidase to yield the active enzyme. As to expression, hemocytes and plasma.

The protein localises to the secreted. The catalysed reaction is 2 L-dopa + O2 = 2 L-dopaquinone + 2 H2O. It catalyses the reaction L-tyrosine + O2 = L-dopaquinone + H2O. This is a copper-containing oxidase that functions in the formation of pigments such as melanins and other polyphenolic compounds. Catalyzes the rate-limiting conversions of tyrosine to DOPA, DOPA to DOPA-quinone and possibly 5,6 dihydroxyindole to indole-5'6 quinone. This chain is Phenoloxidase 3, found in Sarcophaga argyrostoma (Flesh fly).